Reading from the N-terminus, the 590-residue chain is L-gulonolactone oxidase 5 (590 aa).

A signal peptide spans 1–31 (MAFGYSPSYCSFWRTLLGLYCLFTLVHTVIS). Residues 60-242 (STCRAANVAY…SQVTFELQPM (183 aa)) enclose the FAD-binding PCMH-type domain.

It belongs to the oxygen-dependent FAD-linked oxidoreductase family. FAD is required as a cofactor.

It carries out the reaction L-gulono-1,4-lactone + O2 = L-ascorbate + H2O2 + H(+). Its pathway is cofactor biosynthesis; L-ascorbate biosynthesis. Catalyzes the oxidation of L-gulono-1,4-lactone to ascorbic acid. L-gulono-1,4-lactone is oxidized to hydrogen peroxide and L-xylo-hexulonolactone which spontaneously isomerizes to L-ascorbate. The polypeptide is L-gulonolactone oxidase 5 (Arabidopsis thaliana (Mouse-ear cress)).